A 473-amino-acid polypeptide reads, in one-letter code: Ribulose bisphosphate carboxylase large chain (473 aa).

2 residues coordinate substrate: N116 and T166. The Proton acceptor role is filled by K168. K170 contributes to the substrate binding site. Residues K194, D196, and E197 each contribute to the Mg(2+) site. K194 carries the post-translational modification N6-carboxylysine. Residue H287 is the Proton acceptor of the active site. 3 residues coordinate substrate: R288, H320, and S372.

The protein belongs to the RuBisCO large chain family. Type I subfamily. Heterohexadecamer of 8 large chains and 8 small chains. Requires Mg(2+) as cofactor.

The enzyme catalyses 2 (2R)-3-phosphoglycerate + 2 H(+) = D-ribulose 1,5-bisphosphate + CO2 + H2O. It catalyses the reaction D-ribulose 1,5-bisphosphate + O2 = 2-phosphoglycolate + (2R)-3-phosphoglycerate + 2 H(+). Functionally, ruBisCO catalyzes two reactions: the carboxylation of D-ribulose 1,5-bisphosphate, the primary event in carbon dioxide fixation, as well as the oxidative fragmentation of the pentose substrate. Both reactions occur simultaneously and in competition at the same active site. The protein is Ribulose bisphosphate carboxylase large chain of Nitrobacter winogradskyi (Nitrobacter agilis).